Here is a 261-residue protein sequence, read N- to C-terminus: Acyl-[acyl-carrier-protein]--UDP-N-acetylglucosamine O-acyltransferase (261 aa).

It belongs to the transferase hexapeptide repeat family. LpxA subfamily. In terms of assembly, homotrimer.

It is found in the cytoplasm. It carries out the reaction a (3R)-hydroxyacyl-[ACP] + UDP-N-acetyl-alpha-D-glucosamine = a UDP-3-O-[(3R)-3-hydroxyacyl]-N-acetyl-alpha-D-glucosamine + holo-[ACP]. It functions in the pathway glycolipid biosynthesis; lipid IV(A) biosynthesis; lipid IV(A) from (3R)-3-hydroxytetradecanoyl-[acyl-carrier-protein] and UDP-N-acetyl-alpha-D-glucosamine: step 1/6. Functionally, involved in the biosynthesis of lipid A, a phosphorylated glycolipid that anchors the lipopolysaccharide to the outer membrane of the cell. The chain is Acyl-[acyl-carrier-protein]--UDP-N-acetylglucosamine O-acyltransferase from Aquifex aeolicus (strain VF5).